The following is a 109-amino-acid chain: Nucleoid-associated protein CKO_02678 (109 aa).

The interval 89-109 (KEKMASVSSGMQLPPGFKMPF) is disordered.

This sequence belongs to the YbaB/EbfC family. As to quaternary structure, homodimer.

It is found in the cytoplasm. The protein localises to the nucleoid. Its function is as follows. Binds to DNA and alters its conformation. May be involved in regulation of gene expression, nucleoid organization and DNA protection. In Citrobacter koseri (strain ATCC BAA-895 / CDC 4225-83 / SGSC4696), this protein is Nucleoid-associated protein CKO_02678.